We begin with the raw amino-acid sequence, 829 residues long: E3 ubiquitin-protein ligase Jade-2 (829 aa).

Residues 1–52 (MEEKRRKYSISSDNSDTTDGHVTSTSASRCSKLPSSTKSGWPRQNEKKPSEV) are disordered. Serine 9 and serine 15 each carry phosphoserine. Residues 9 to 39 (SISSDNSDTTDGHVTSTSASRCSKLPSSTKS) are compositionally biased toward polar residues. Residues lysine 32 and lysine 38 each carry the N6-acetyllysine modification. Position 117 is a phosphoserine (serine 117). A PHD-type 1 zinc finger spans residues 199–249 (DVVCDVCRSPEGEDGNEMVFCDKCNVCVHQACYGILKVPTGSWLCRTCALG). The C2HC pre-PHD-type zinc-finger motif lies at 251–285 (QPKCLLCPKRGGALKPTRSGTKWVHVSCALWIPEV). Lysine 298 is subject to N6-acetyllysine. The PHD-type 2 zinc-finger motif lies at 309–365 (LSCSLCKECTGTCIQCSMPSCITAFHVTCAFDRGLEMRTILADNDEVKFKSLCQEHS). 3 disordered regions span residues 362-383 (QEHS…PSQA), 517-555 (REPS…AGPE), and 622-817 (SFMR…REAG). The segment covering 522-535 (RRSKGKKNDSKRKG) has biased composition (basic residues). A compositionally biased stretch (basic and acidic residues) spans 536 to 552 (REGPKGSSPEKKEKVKA). The segment covering 637-650 (KARGRTRLPAKKKP) has biased composition (basic residues). Positions 776 to 786 (ERPKVSLHFDT) are enriched in basic and acidic residues. Residues 792–806 (FSDEEMSDSEVEAED) are compositionally biased toward acidic residues.

It belongs to the JADE family. As to quaternary structure, component of the HBO1 complex composed at least of ING4 or ING5, MYST2/HBO1, MEAF6, and one of JADE1, JADE2 and JADE3. Interacts (via C-terminus) with KDM1A (via AOD/Tower domain).

The catalysed reaction is S-ubiquitinyl-[E2 ubiquitin-conjugating enzyme]-L-cysteine + [acceptor protein]-L-lysine = [E2 ubiquitin-conjugating enzyme]-L-cysteine + N(6)-ubiquitinyl-[acceptor protein]-L-lysine.. It functions in the pathway protein modification; protein ubiquitination. Functionally, scaffold subunit of some HBO1 complexes, which have a histone H4 acetyltransferase activity. Acts as a E3 ubiquitin-protein ligase mediating the ubiquitination and subsequent proteasomal degradation of target protein histone demethylase KDM1A. Also acts as a ubiquitin ligase E3 toward itself. Positive regulator of neurogenesis. The protein is E3 ubiquitin-protein ligase Jade-2 (Jade2) of Mus musculus (Mouse).